Here is a 359-residue protein sequence, read N- to C-terminus: S-adenosylmethionine:tRNA ribosyltransferase-isomerase (359 aa).

The protein belongs to the QueA family. In terms of assembly, monomer.

The protein resides in the cytoplasm. It carries out the reaction 7-aminomethyl-7-carbaguanosine(34) in tRNA + S-adenosyl-L-methionine = epoxyqueuosine(34) in tRNA + adenine + L-methionine + 2 H(+). The protein operates within tRNA modification; tRNA-queuosine biosynthesis. Transfers and isomerizes the ribose moiety from AdoMet to the 7-aminomethyl group of 7-deazaguanine (preQ1-tRNA) to give epoxyqueuosine (oQ-tRNA). The sequence is that of S-adenosylmethionine:tRNA ribosyltransferase-isomerase from Alcanivorax borkumensis (strain ATCC 700651 / DSM 11573 / NCIMB 13689 / SK2).